We begin with the raw amino-acid sequence, 109 residues long: Parvalbumin, thymic (109 aa).

An N-acetylalanine modification is found at Ala-2. EF-hand domains lie at 39-74 (KTPDQIKKVFGILDQDKSGFIEEEELQLFLKNFSSS) and 78-109 (LTSAETKAFLAAGDTDGDGKIGVEEFQSLVKA). Ca(2+) is bound by residues Asp-52, Asp-54, Ser-56, Glu-63, Asp-91, Asp-93, Asp-95, Lys-97, and Glu-102.

This sequence belongs to the parvalbumin family.

Functionally, appears to promote immune maturation in bone marrow cells in culture. Binds two calcium ions. This chain is Parvalbumin, thymic, found in Gallus gallus (Chicken).